The chain runs to 241 residues: tRNA pseudouridine synthase B (241 aa).

Aspartate 52 acts as the Nucleophile in catalysis.

This sequence belongs to the pseudouridine synthase TruB family. Type 1 subfamily.

It carries out the reaction uridine(55) in tRNA = pseudouridine(55) in tRNA. Its function is as follows. Responsible for synthesis of pseudouridine from uracil-55 in the psi GC loop of transfer RNAs. The polypeptide is tRNA pseudouridine synthase B (Chloroherpeton thalassium (strain ATCC 35110 / GB-78)).